Consider the following 142-residue polypeptide: Large ribosomal subunit protein uL16 (142 aa).

It belongs to the universal ribosomal protein uL16 family. Part of the 50S ribosomal subunit.

Its function is as follows. Binds 23S rRNA and is also seen to make contacts with the A and possibly P site tRNAs. This is Large ribosomal subunit protein uL16 from Trichormus variabilis (strain ATCC 29413 / PCC 7937) (Anabaena variabilis).